Consider the following 2622-residue polypeptide: Ankyrin-3 (2622 aa).

The tract at residues 1 to 44 is disordered; sequence MAHAASQLKKNRDLEINAEEETEKKKKHRKRSRDRKKKSDANAS. The span at 25-38 shows a compositional bias: basic residues; it reads KKKHRKRSRDRKKK. Residue Ser-39 is modified to Phosphoserine. 23 ANK repeats span residues 73–102, 106–135, 139–168, 172–201, 203–230, 242–271, 275–304, 308–337, 341–370, 374–403, 407–436, 440–469, 473–502, 506–535, 539–568, 572–601, 605–634, 638–667, 671–700, 704–733, 737–766, 770–799, and 803–832; these read NGLNALHLASKEGHVEVVSELLQREANVDA, KGNTALHIASLAGQAEVVKVLVTNGANVNA, NGFTPLYMAAQENHLEVVRFLLDNGASQSL, DGFTPLAVALQQGHDQVVSLLLENDTKGKV, LPALHIAARKDDTKAAALLLQNDTNADI, SGFTPLHIAAHYGNINVATLLLNRAAAVDF, NDITPLHVASKRGNANMVKLLLDRGAKIDA, DGLTPLHCGARSGHEQVVEMLLDRAAPILS, NGLSPLHMATQGDHLNCVQLLLQHNVPVDD, DYLTALHVAAHCGHYKVAKVLLDKKANPNA, NGFTPLHIACKKNRIRVMELLLKHGASIQA, SGLTPIHVAAFMGHVNIVSQLMHHGASPNT, RGETALHMAARSGQAEVVRYLVQDGAQVEA, DDQTPLHISARLGKADIVQQLLQQGASPNA, SGYTPLHLSAREGHEDVAAFLLDHGASLSI, KGFTPLHVAAKYGKLEVASLLLQKSASPDA, SGLTPLHVAAHYDNQKVALLLLDQGASPHA, NGYTPLHIAAKKNQMDIATSLLEYGADANA, QGIASVHLAAQEGHVDMVSLLLSRNANVNL, SGLTPLHLAAQEDRVNVAEVLVNQGAHVDA, MGYTPLHVGCHYGNIKIVNFLLQHSAKVNA, NGYTPLHQAAQQGHTHIINVLLQNNASPNE, and NGNTALAIARRLGYISVVDTLKVVTEEIMT. Ser-631 is modified (phosphoserine). 10 positions are modified to phosphoserine: Val-851, Ser-855, Ser-869, Ser-875, Ser-921, Ser-924, Ser-930, Ser-965, Ser-967, and Ser-1121. Residues 868–889 are disordered; sequence LSDGEYISDGEEGEDAITGDTD. Positions 873–884 are enriched in acidic residues; the sequence is YISDGEEGEDAI. 2 ZU5 domains span residues 992 to 1147 and 1149 to 1296; these read FLVS…VVSR and KQES…LADC. A phosphoserine mark is found at Ser-1458 and Ser-1469. Residues 1510–1539 form a disordered region; that stretch reads TPITVPGPAKSGSLSSSPSNTPSASPLKSI. Residues 1515–1536 are compositionally biased toward low complexity; that stretch reads PGPAKSGSLSSSPSNTPSASPL. Phosphoserine is present on residues Ser-1621, Ser-1624, Ser-1679, Ser-1984, Ser-2102, Ser-2114, and Ser-2117. Disordered stretches follow at residues 1968–1992, 2099–2147, and 2292–2312; these read VESKGPPKSPKSDKGHSPEDDWTEF, ILES…FHEV, and SPDVAKSAAETSAQHAEKDNQ. Residues 1977–1986 are compositionally biased toward basic and acidic residues; the sequence is PKSDKGHSPE. The span at 2106 to 2127 shows a compositional bias: basic and acidic residues; that stretch reads FSQHDQDKSPLSDSGFETRSEK. The segment covering 2128 to 2137 has biased composition (polar residues); sequence TPSAPQSAES. The Death domain occupies 2336-2420; that stretch reads TDIRMAIVAD…DIVTLLEGPI (85 aa). Residues Ser-2457, Ser-2475, and Ser-2544 each carry the phosphoserine modification. Residues 2568–2622 are disordered; that stretch reads CVPVGMKKMTRTPADGKARLNLQEEEGSARSEPKQGEGYKVKTKKEIRNVEKKAH. The segment covering 2594-2622 has biased composition (basic and acidic residues); sequence GSARSEPKQGEGYKVKTKKEIRNVEKKAH.

May be a constituent of a NFASC/NRCAM/ankyrin G complex. Interacts with RHBG. Directly interacts with DMD and betaDAG1; this interaction does not interfere with DMD-binding and is required for DMD and betaDAG1 retention at costameres. Interacts (via N-terminal ANK repeats) with SCHIP1 isoform 7 (via C-terminus); this interaction is required for the localization at axon initial segments (AISs) and nodes of Ranvier (NRs). Interacts with PLEC and FLNC. Interacts (via ANK repeats) with IQCJ-SCHIP1; required for IQCJ-SCHIP1 localization at axon initial segments (AIS) and nodes of Ranvier. Interacts with SCHIP1. Interacts with KCNA1; this inhibits channel activity. Interacts with SCN5A. Interacts with PKP2 and GJA1/CX43. In terms of assembly, interacts (via its C-terminal muscle-specific Obscurin/Titin-Binding-related domain sequence) with PLEC and FLNC. As to expression, expressed in the heart (at protein level). Expressed in skeletal muscle (at protein level). Expressed at highest levels in brain and testis, followed by skin, kidney, liver and spleen. May be specifically expressed in muscle tissues, including heart and skeletal muscle (extensor digitorum longus) (at protein level). In terms of tissue distribution, expressed in skeletal muscle, brain, lung, heart, testes and kidney.

The protein localises to the cytoplasm. Its subcellular location is the cytoskeleton. The protein resides in the cell projection. It is found in the axon. It localises to the cell membrane. The protein localises to the sarcolemma. Its subcellular location is the postsynaptic cell membrane. The protein resides in the lysosome. It is found in the T-tubule. In terms of biological role, membrane-cytoskeleton linker. May participate in the maintenance/targeting of ion channels and cell adhesion molecules at the nodes of Ranvier and axonal initial segments. In skeletal muscle, required for costamere localization of DMD and betaDAG1. Regulates KCNA1 channel activity in function of dietary Mg(2+) levels, and thereby contributes to the regulation of renal Mg(2+) reabsorption. Required for intracellular adhesion and junctional conductance in myocytes, potentially via stabilization of GJA1/CX43 protein abundance and promotion of PKP2, GJA1/CX43, and SCN5A/Nav1.5 localization to cell-cell junctions. This is Ankyrin-3 (Ank3) from Rattus norvegicus (Rat).